Consider the following 233-residue polypeptide: Zinc import ATP-binding protein ZnuC (233 aa).

One can recognise an ABC transporter domain in the interval Ile-6–Leu-222. Gly-38–Thr-45 contacts ATP.

Belongs to the ABC transporter superfamily. Zinc importer (TC 3.A.1.15.5) family. The complex is composed of two ATP-binding proteins (ZnuC), two transmembrane proteins (ZnuB) and a solute-binding protein (ZnuA).

The protein localises to the cell inner membrane. The catalysed reaction is Zn(2+)(out) + ATP(in) + H2O(in) = Zn(2+)(in) + ADP(in) + phosphate(in) + H(+)(in). Part of the ABC transporter complex ZnuABC involved in zinc import. Responsible for energy coupling to the transport system. This is Zinc import ATP-binding protein ZnuC from Rickettsia prowazekii (strain Madrid E).